The following is a 242-amino-acid chain: 1-(5-phosphoribosyl)-5-[(5-phosphoribosylamino)methylideneamino] imidazole-4-carboxamide isomerase (242 aa).

Catalysis depends on Asp-10, which acts as the Proton acceptor. Asp-132 functions as the Proton donor in the catalytic mechanism.

Belongs to the HisA/HisF family.

Its subcellular location is the cytoplasm. The enzyme catalyses 1-(5-phospho-beta-D-ribosyl)-5-[(5-phospho-beta-D-ribosylamino)methylideneamino]imidazole-4-carboxamide = 5-[(5-phospho-1-deoxy-D-ribulos-1-ylimino)methylamino]-1-(5-phospho-beta-D-ribosyl)imidazole-4-carboxamide. Its pathway is amino-acid biosynthesis; L-histidine biosynthesis; L-histidine from 5-phospho-alpha-D-ribose 1-diphosphate: step 4/9. This is 1-(5-phosphoribosyl)-5-[(5-phosphoribosylamino)methylideneamino] imidazole-4-carboxamide isomerase from Streptococcus sanguinis (strain SK36).